The chain runs to 252 residues: MLIGSHVSSTDPLAAAEVEGADVVQIFLGNPQSWKAPTLRSDADVLKATALPVYVHAPYLINVASANSRVRIPSRKILQQTCDAAADIGAAAVVVHGGYVADDNDLEDGFQRWRKALDQLQTDVPVYLENTAGGDHAMARRFDTIARLWDVIGETGIGFCLDTCHAWAAGEGLIHVVDRIKAITGRIDLVHCNDSKDEAGSGRDRHANLGSGQIDAELLVAAVKVAGAPVICETAEEGRKDDIAFLREKTSG.

Zn(2+) is bound by residues His-56, His-96, Glu-129, Asp-162, His-165, His-191, Asp-204, His-206, and Glu-233.

It belongs to the AP endonuclease 2 family. Zn(2+) is required as a cofactor.

It carries out the reaction Endonucleolytic cleavage to 5'-phosphooligonucleotide end-products.. Its function is as follows. Endonuclease IV plays a role in DNA repair. It cleaves phosphodiester bonds at apurinic or apyrimidinic (AP) sites, generating a 3'-hydroxyl group and a 5'-terminal sugar phosphate. The protein is Probable endonuclease 4 of Mycobacterium leprae (strain Br4923).